The sequence spans 382 residues: Sphingosine kinase 1 (382 aa).

The DAGKc domain occupies 12–159 (PRPCRVLVLL…MNLLSLHTAS (148 aa)). ATP is bound by residues 22–24 (NPQ) and 54–58 (TERKN). 79 to 82 (SGDG) contacts substrate. The Proton donor/acceptor role is filled by D81. ATP contacts are provided by residues E86 and 111 to 113 (GSG). 2 short sequence motifs (nuclear export signal) span residues 147–155 (LSPMNLLSL) and 161–169 (LRLYSVLSL). D178 contributes to the substrate binding site. Residues R185 and R191 each coordinate ATP. At T193 the chain carries Phosphothreonine. S225 carries the phosphoserine modification. Residue 340-342 (DGE) coordinates ATP.

Interacts with ACY1. Binds to calmodulin. Interacts with SPHKAP. Interacts with CIB1, the interaction occurs in a calcium-dependent manner. Interacts with TRAF2. Interacts with EEF1A1; the interaction enhances SPHK1 kinase activity. Mg(2+) serves as cofactor. As to expression, widely expressed. Expressed in brain (at protein level). Detected in neurons.

Its subcellular location is the cytoplasm. It localises to the endosome membrane. The protein resides in the nucleus. It is found in the cell membrane. The protein localises to the synapse. The enzyme catalyses a sphingoid base + ATP = a sphingoid 1-phosphate + ADP + H(+). It carries out the reaction L-seryl-[protein] + acetyl-CoA = O-acetyl-L-seryl-[protein] + CoA. The catalysed reaction is sphinganine + ATP = sphinganine 1-phosphate + ADP + H(+). It catalyses the reaction sphing-4-enine + ATP = sphing-4-enine 1-phosphate + ADP + H(+). The enzyme catalyses 1-O-hexadecyl-2-amino-sn-glycerol + ATP = 1-O-hexadecyl-2-desoxy-2-amino-sn-glycero-3-phosphate + ADP + H(+). Acetyltransferase activity increases in presence of the kinase substrate, sphingosine. In Purkinje cells, kinase activity on sphingosine increases in presence of VEGFA. In neurons, kinase activity increases during the first 24h in presence of Amyloid-beta protein 42 to decrease after 96h. In terms of biological role, catalyzes the phosphorylation of sphingosine to form sphingosine 1-phosphate (SPP), a lipid mediator with both intra- and extracellular functions. Also acts on D-erythro-sphingosine and to a lesser extent sphinganine, but not other lipids, such as D,L-threo-dihydrosphingosine, N,N-dimethylsphingosine, diacylglycerol, ceramide, or phosphatidylinositol. In contrast to proapoptotic SPHK2, has a negative effect on intracellular ceramide levels, enhances cell growth and inhibits apoptosis. Involved in the regulation of inflammatory response and neuroinflammation. Via the product sphingosine 1-phosphate, stimulates TRAF2 E3 ubiquitin ligase activity, and promotes activation of NF-kappa-B in response to TNF signaling. In response to TNF and in parallel to NF-kappa-B activation, negatively regulates RANTES induction through p38 MAPK signaling pathway. Involved in endocytic membrane trafficking induced by sphingosine, recruited to dilate endosomes, also plays a role on later stages of endosomal maturation and membrane fusion independently of its kinase activity. In Purkinje cells, seems to be also involved in the regulation of autophagosome-lysosome fusion upon VEGFA. Functionally, has serine acetyltransferase activity on PTGS2/COX2 in an acetyl-CoA dependent manner. The acetyltransferase activity increases in presence of the kinase substrate, sphingosine. During neuroinflammation, through PTGS2 acetylation, promotes neuronal secretion of specialized preresolving mediators (SPMs), especially 15-R-lipoxin A4, which results in an increase of phagocytic microglia. This is Sphingosine kinase 1 from Mus musculus (Mouse).